A 315-amino-acid polypeptide reads, in one-letter code: MRVILAPMEGVVDDLMRDILSSINPYDLLVTEFVRVVDQLLPEKVFLKLCPELLSGGYTPSGTPVRVQLLGQEPNCMAENAMRAIELGSHGVDANFGCPAKMVNRSNGGAVLLQYPNTIHDIVRAMRQAVPAEHPVTAKIRLGYEDKSLFMENALAVYEAGATELAIHARSKVDGYKPPAYWEYITEVRERLPIPVIANGEIWNRDDAKRCMQVTGCDSIMIGRGAISLPNLADTIKTGATPYSWADTLQLMLSYTQRELSGRKSDYYPARIKQWFSYLNRQYPEADTLFRELRIYKTTEEIVRVLEQAQHHLNQ.

Residues 7 to 9 (PME) and glutamine 68 each bind FMN. Cysteine 98 functions as the Proton donor in the catalytic mechanism. FMN contacts are provided by residues lysine 139, 199–201 (NGE), and 223–224 (GR).

It belongs to the Dus family. DusC subfamily. The cofactor is FMN.

The catalysed reaction is 5,6-dihydrouridine(16) in tRNA + NADP(+) = uridine(16) in tRNA + NADPH + H(+). It catalyses the reaction 5,6-dihydrouridine(16) in tRNA + NAD(+) = uridine(16) in tRNA + NADH + H(+). In terms of biological role, catalyzes the synthesis of 5,6-dihydrouridine (D), a modified base found in the D-loop of most tRNAs, via the reduction of the C5-C6 double bond in target uridines. Specifically modifies U16 in tRNAs. The polypeptide is tRNA-dihydrouridine(16) synthase (Shewanella oneidensis (strain ATCC 700550 / JCM 31522 / CIP 106686 / LMG 19005 / NCIMB 14063 / MR-1)).